Reading from the N-terminus, the 418-residue chain is Phosphoglycerate kinase (418 aa).

Substrate is bound by residues 18-20 (DFN), arginine 34, 57-60 (HLGR), arginine 115, and arginine 171. ATP is bound by residues lysine 224, glycine 315, glutamate 346, and 375–378 (GGDS).

It belongs to the phosphoglycerate kinase family. In terms of assembly, monomer.

The protein resides in the cytoplasm. The enzyme catalyses (2R)-3-phosphoglycerate + ATP = (2R)-3-phospho-glyceroyl phosphate + ADP. Its pathway is carbohydrate degradation; glycolysis; pyruvate from D-glyceraldehyde 3-phosphate: step 2/5. In Porphyromonas gingivalis (strain ATCC BAA-308 / W83), this protein is Phosphoglycerate kinase.